The following is a 361-amino-acid chain: UPF0283 membrane protein Smed_1530 (361 aa).

The segment at 1–40 (MNDDSNGRRRRPAAFPVGTEDATSRELEQTPRRAPGSFSD) is disordered. The segment covering 22 to 31 (ATSRELEQTP) has biased composition (basic and acidic residues). Transmembrane regions (helical) follow at residues 76–96 (FGKI…GLWV) and 109–129 (WLGY…LIVV).

It belongs to the UPF0283 family.

The protein resides in the cell inner membrane. The polypeptide is UPF0283 membrane protein Smed_1530 (Sinorhizobium medicae (strain WSM419) (Ensifer medicae)).